The chain runs to 206 residues: Ras-related protein RABG3d (206 aa).

Position 15-22 (15-22 (GDSGVGKT)) interacts with GTP. An Effector region motif is present at residues 37–45 (YKATIGADF). GTP contacts are provided by residues 63–67 (DTAGQ), 125–128 (NKTD), and 158–159 (SA). S-geranylgeranyl cysteine attachment occurs at residues Cys-204 and Cys-206. Cys-206 is modified (cysteine methyl ester).

This sequence belongs to the small GTPase superfamily. Rab family.

It is found in the cell membrane. Intracellular vesicle trafficking and protein transport. This Arabidopsis thaliana (Mouse-ear cress) protein is Ras-related protein RABG3d (RABG3D).